The sequence spans 175 residues: MKEKIKLIKGNIVDQEVDAIVNAANSSLIGGGGVDGAIHKAGGPAIAEELKVIREKQGGCPTGHAVITGAGNLKAKYVIHAVGPIWKGGNHNEDNLLASAYIESLKLADEYNVKTIAFPSISTGAYGFPVERAARIALRVVSDYLEGSSIKEVRFVLFSDRDYEVYSKAYEELDK.

The Macro domain occupies 1 to 174 (MKEKIKLIKG…VYSKAYEELD (174 aa)).

The protein belongs to the MacroD-type family.

In Caldanaerobacter subterraneus subsp. tengcongensis (strain DSM 15242 / JCM 11007 / NBRC 100824 / MB4) (Thermoanaerobacter tengcongensis), this protein is Macro domain-containing protein TTE0995.